The sequence spans 95 residues: MIKKEEVEKIAGLAYLKLSDEERETFTRQLGDILDYVEKLNELDTDGVVPTAYTVPMKNVLRDDKVGSSIPREEALDNAPDKKDGLFRVPSIIGE.

It belongs to the GatC family. As to quaternary structure, heterotrimer of A, B and C subunits.

The enzyme catalyses L-glutamyl-tRNA(Gln) + L-glutamine + ATP + H2O = L-glutaminyl-tRNA(Gln) + L-glutamate + ADP + phosphate + H(+). The catalysed reaction is L-aspartyl-tRNA(Asn) + L-glutamine + ATP + H2O = L-asparaginyl-tRNA(Asn) + L-glutamate + ADP + phosphate + 2 H(+). Functionally, allows the formation of correctly charged Asn-tRNA(Asn) or Gln-tRNA(Gln) through the transamidation of misacylated Asp-tRNA(Asn) or Glu-tRNA(Gln) in organisms which lack either or both of asparaginyl-tRNA or glutaminyl-tRNA synthetases. The reaction takes place in the presence of glutamine and ATP through an activated phospho-Asp-tRNA(Asn) or phospho-Glu-tRNA(Gln). The polypeptide is Aspartyl/glutamyl-tRNA(Asn/Gln) amidotransferase subunit C (Halothermothrix orenii (strain H 168 / OCM 544 / DSM 9562)).